The sequence spans 396 residues: Period circadian protein (396 aa).

Disordered regions lie at residues 27–120 (VTAP…APPV), 167–188 (SGPGPGHGHGIKRGGSHSWEGE), 253–275 (GGNGNVGSGNGNNNQPSTNQYTQ), and 333–362 (SPSSTNTNPNRPHKHAHVHNSSEKPSTSQA). The span at 93–114 (GTSGTGNSGDGGGGGGANGTGS) shows a compositional bias: gly residues. Gly residues predominate over residues 253–262 (GGNGNVGSGN). The span at 333 to 342 (SPSSTNTNPN) shows a compositional bias: low complexity.

In terms of assembly, forms a heterodimer with timeless (TIM); the complex then translocates into the nucleus. In terms of processing, phosphorylated with a circadian rhythmicity, probably by the double-time protein (dbt). Phosphorylation could be implicated in the stability of per monomer and in the formation of heterodimer per-tim.

Its subcellular location is the nucleus. It localises to the cytoplasm. It is found in the perinuclear region. Functionally, essential for biological clock functions. Determines the period length of circadian and ultradian rhythms; an increase in PER dosage leads to shortened circadian rhythms and a decrease leads to lengthened circadian rhythms. Essential for the circadian rhythmicity of locomotor activity, eclosion behavior, and for the rhythmic component of the male courtship song that originates in the thoracic nervous system. The biological cycle depends on the rhythmic formation and nuclear localization of the TIM-PER complex. Light induces the degradation of TIM, which promotes elimination of PER. Nuclear activity of the heterodimer coordinatively regulates PER and TIM transcription through a negative feedback loop. Behaves as a negative element in circadian transcriptional loop. Does not appear to bind DNA, suggesting indirect transcriptional inhibition. The protein is Period circadian protein (per) of Drosophila paulistorum (Fruit fly).